The chain runs to 334 residues: Tryptophan--tRNA ligase (334 aa).

Residues 11–13 and 19–20 each bind ATP; these read QPS and GN. The 'HIGH' region signature appears at 12–20; the sequence is PSGELTIGN. D135 is an L-tryptophan binding site. Residues 147–149, V186, and 195–199 contribute to the ATP site; these read GED and KMSKS. The 'KMSKS' region signature appears at 195 to 199; it reads KMSKS.

This sequence belongs to the class-I aminoacyl-tRNA synthetase family. In terms of assembly, homodimer.

Its subcellular location is the cytoplasm. The catalysed reaction is tRNA(Trp) + L-tryptophan + ATP = L-tryptophyl-tRNA(Trp) + AMP + diphosphate + H(+). Its function is as follows. Catalyzes the attachment of tryptophan to tRNA(Trp). The polypeptide is Tryptophan--tRNA ligase (Salmonella typhi).